Reading from the N-terminus, the 435-residue chain is Gamma-glutamyl phosphate reductase (435 aa).

The protein belongs to the gamma-glutamyl phosphate reductase family.

It localises to the cytoplasm. The catalysed reaction is L-glutamate 5-semialdehyde + phosphate + NADP(+) = L-glutamyl 5-phosphate + NADPH + H(+). It functions in the pathway amino-acid biosynthesis; L-proline biosynthesis; L-glutamate 5-semialdehyde from L-glutamate: step 2/2. Functionally, catalyzes the NADPH-dependent reduction of L-glutamate 5-phosphate into L-glutamate 5-semialdehyde and phosphate. The product spontaneously undergoes cyclization to form 1-pyrroline-5-carboxylate. The polypeptide is Gamma-glutamyl phosphate reductase (Nostoc punctiforme (strain ATCC 29133 / PCC 73102)).